The sequence spans 698 residues: Auxin response factor 22 (698 aa).

The segment at residues Phe128–Lys230 is a DNA-binding region (TF-B3). Positions Thr549–Ala577 are enriched in polar residues. The interval Thr549–Asp579 is disordered. The region spanning Ala603 to Arg683 is the PB1 domain.

The protein belongs to the ARF family. As to quaternary structure, homodimers and heterodimers. In terms of tissue distribution, expressed in roots, culms, leaves and young panicles.

It is found in the nucleus. Its function is as follows. Auxin response factors (ARFs) are transcriptional factors that bind specifically to the DNA sequence 5'-TGTCTC-3' found in the auxin-responsive promoter elements (AuxREs). The sequence is that of Auxin response factor 22 (ARF22) from Oryza sativa subsp. japonica (Rice).